The sequence spans 388 residues: Protein phosphatase 2C 57 (388 aa).

Positions 59-348 constitute a PPM-type phosphatase domain; sequence RWGYTSVQGF…DNISIIIADL (290 aa). Mn(2+) is bound by residues aspartate 93, glycine 94, aspartate 296, and aspartate 339. A helical membrane pass occupies residues 363–383; the sequence is VVVELVQAATTIGLVTVGIWM.

The protein belongs to the PP2C family. The cofactor is Mg(2+). Mn(2+) is required as a cofactor.

It localises to the membrane. It is found in the plastid. The protein resides in the chloroplast stroma. It catalyses the reaction O-phospho-L-seryl-[protein] + H2O = L-seryl-[protein] + phosphate. It carries out the reaction O-phospho-L-threonyl-[protein] + H2O = L-threonyl-[protein] + phosphate. Protein phosphatase specifically required for efficient dephosphorylation of the light-harvesting complex II outer antennae (LCHII) and transition from state 2 to state 1. State transition plays a central role in response to environmental changes and allows to adjust to changing light conditions via the redistribution of light excitation energy between photosystem II (PSII) and photosystem I (PSI) in a short time by relocating LHCII proteins. Mainly responsible for the dephosphorylation of Lhcb1 and Lhcb2 but not of the photosystem II core proteins. This Arabidopsis thaliana (Mouse-ear cress) protein is Protein phosphatase 2C 57.